A 470-amino-acid polypeptide reads, in one-letter code: Probable E3 ubiquitin-protein ligase TRIML1 (470 aa).

Residues 22 to 63 (CFICLDYFSSPVTTECGHSFCLMCLLKSWEEHNTPLSCPECW) form an RING-type zinc finger. 2 coiled-coil regions span residues 135–170 (SEAEEQHKEKLQDIINILRKKKKEVQAILNHEKERV) and 196–235 (KEEEQLQLQLLEREEKANMKKLRENEIQLTQQIRRLGKMI). The region spanning 273 to 470 (TELSLCHITG…NTDPLIICHI (198 aa)) is the B30.2/SPRY domain.

In terms of assembly, interacts with USP5. In terms of tissue distribution, testis.

The enzyme catalyses S-ubiquitinyl-[E2 ubiquitin-conjugating enzyme]-L-cysteine + [acceptor protein]-L-lysine = [E2 ubiquitin-conjugating enzyme]-L-cysteine + N(6)-ubiquitinyl-[acceptor protein]-L-lysine.. Its pathway is protein modification; protein ubiquitination. In terms of biological role, probable E3 ubiquitin-protein ligase which plays an important role in blastocyst development. Involved in progression of blastocyst stage and subsequent embryo development. The polypeptide is Probable E3 ubiquitin-protein ligase TRIML1 (Triml1) (Mus musculus (Mouse)).